Consider the following 258-residue polypeptide: NAD kinase (258 aa).

The active-site Proton acceptor is the D51. NAD(+) is bound by residues 51-52, 119-120, K130, D149, 160-165, and A184; these read DG, ND, and TAYSLS.

It belongs to the NAD kinase family. Homodimer. A divalent metal cation is required as a cofactor.

It is found in the cytoplasm. The catalysed reaction is NAD(+) + ATP = ADP + NADP(+) + H(+). Its function is as follows. Involved in the regulation of the intracellular balance between NAD(H) and NADP(H), and is a key enzyme in the biosynthesis of NADP. Catalyzes specifically the phosphorylation on 2'-hydroxyl of the adenosine moiety of NAD to yield NADP. The sequence is that of NAD kinase (NADK) from Thermotoga maritima (strain ATCC 43589 / DSM 3109 / JCM 10099 / NBRC 100826 / MSB8).